Consider the following 318-residue polypeptide: HPr kinase/phosphorylase (318 aa).

Catalysis depends on residues histidine 143 and lysine 164. Residue glycine 158–serine 165 participates in ATP binding. Serine 165 contributes to the Mg(2+) binding site. The active-site Proton acceptor; for phosphorylation activity. Proton donor; for dephosphorylation activity is the aspartate 182. Positions methionine 206–asparagine 215 are important for the catalytic mechanism of both phosphorylation and dephosphorylation. Glutamate 207 lines the Mg(2+) pocket. Residue arginine 248 is part of the active site. An important for the catalytic mechanism of dephosphorylation region spans residues proline 269–arginine 274.

It belongs to the HPrK/P family. In terms of assembly, homohexamer. It depends on Mg(2+) as a cofactor.

The catalysed reaction is [HPr protein]-L-serine + ATP = [HPr protein]-O-phospho-L-serine + ADP + H(+). It catalyses the reaction [HPr protein]-O-phospho-L-serine + phosphate + H(+) = [HPr protein]-L-serine + diphosphate. In terms of biological role, catalyzes the ATP- as well as the pyrophosphate-dependent phosphorylation of a specific serine residue in HPr, a phosphocarrier protein of the phosphoenolpyruvate-dependent sugar phosphotransferase system (PTS). HprK/P also catalyzes the pyrophosphate-producing, inorganic phosphate-dependent dephosphorylation (phosphorolysis) of seryl-phosphorylated HPr (P-Ser-HPr). This chain is HPr kinase/phosphorylase, found in Leptospira borgpetersenii serovar Hardjo-bovis (strain JB197).